Reading from the N-terminus, the 452-residue chain is Cholesterol 7-desaturase nvd 2 (452 aa).

The next 2 membrane-spanning stretches (helical) occupy residues 6–26 and 32–52; these read LIRITVMVITSERLLILMGLC and FPVMIRVVFNAAVAIVIALVM. The Rieske domain maps to 107 to 212; sequence WFKVADSTWI…CCEVDGMAYL (106 aa). The [2Fe-2S] cluster site is built by cysteine 148, histidine 150, cysteine 169, and histidine 172.

The protein belongs to the cholesterol 7-desaturase family. It depends on [2Fe-2S] cluster as a cofactor.

Its subcellular location is the membrane. The enzyme catalyses cholesterol + NADPH + O2 + H(+) = 7-dehydrocholesterol + NADP(+) + 2 H2O. It catalyses the reaction cholesterol + NADH + O2 + H(+) = 7-dehydrocholesterol + NAD(+) + 2 H2O. It participates in steroid hormone biosynthesis; dafachronic acid biosynthesis. Functionally, catalyzes the production of 7-dehydrocholesterol (7-DHC or cholesta-5,7-dien-3beta-ol) by inserting a double bond (desaturating) at the C7-C8 single bond of cholesterol. Essential regulator of steroid biosynthesis as this reaction is the first step in the synthesis of the steroid hormone Delta(7)-dafachronic acid. The sequence is that of Cholesterol 7-desaturase nvd 2 from Ciona intestinalis (Transparent sea squirt).